Consider the following 512-residue polypeptide: ATP synthase subunit alpha, chloroplastic (512 aa).

170-177 (GDRQTGKT) serves as a coordination point for ATP.

Belongs to the ATPase alpha/beta chains family. As to quaternary structure, F-type ATPases have 2 components, CF(1) - the catalytic core - and CF(0) - the membrane proton channel. CF(1) has five subunits: alpha(3), beta(3), gamma(1), delta(1), epsilon(1). CF(0) has four main subunits: a, b, b' and c.

Its subcellular location is the plastid. It is found in the chloroplast thylakoid membrane. It catalyses the reaction ATP + H2O + 4 H(+)(in) = ADP + phosphate + 5 H(+)(out). Functionally, produces ATP from ADP in the presence of a proton gradient across the membrane. The alpha chain is a regulatory subunit. This Chaetosphaeridium globosum (Charophycean green alga) protein is ATP synthase subunit alpha, chloroplastic.